The sequence spans 149 residues: Nucleoside diphosphate kinase (149 aa).

6 residues coordinate ATP: K9, F57, R85, T91, R102, and N112. H115 serves as the catalytic Pros-phosphohistidine intermediate.

Belongs to the NDK family. Homotetramer. Mg(2+) serves as cofactor.

The protein resides in the cytoplasm. It catalyses the reaction a 2'-deoxyribonucleoside 5'-diphosphate + ATP = a 2'-deoxyribonucleoside 5'-triphosphate + ADP. The enzyme catalyses a ribonucleoside 5'-diphosphate + ATP = a ribonucleoside 5'-triphosphate + ADP. Functionally, major role in the synthesis of nucleoside triphosphates other than ATP. The ATP gamma phosphate is transferred to the NDP beta phosphate via a ping-pong mechanism, using a phosphorylated active-site intermediate. The sequence is that of Nucleoside diphosphate kinase from Synechocystis sp. (strain ATCC 27184 / PCC 6803 / Kazusa).